The sequence spans 394 residues: MGLRMSESAKPYFAMVCLQFGYAGMNLVTKTVLDRGMSHYVLVAYRNAFATAAIAPFALLSERKVRSKMTFPIFMRIFLLALLGPVIDQNLYYIGLKLTSPTFSSAVSNIVPAITIILATLFRMEKVEMRKVRCLVKVMGTLVTVVGSILMIFYKGPFINFFRSHLTAASSPPTADYLKAAVFLLLASLSWASFFVLQAATLKKYSAHLSMSTMVCFMGTLQSLALAFVMEHNPSALNIGFDMNLLASAYAGIMSSSIAYYVQGLMMQRKGPVFVTAFNPLIVVIVSIMSFFVLGQGIYLGGVIGVVVLMVGVYAVLWGKHVDDDGEETRHEDNVVAVKCCSGNNGLTIMPKIDEADEEDVETGKATSEKESSVPEVVVVVFCSENVHSVSRPN.

The next 10 helical transmembrane spans lie at 13 to 33, 40 to 60, 67 to 87, 102 to 122, 142 to 162, 180 to 200, 209 to 229, 245 to 265, 273 to 293, and 298 to 318; these read FAMV…KTVL, YVLV…FALL, SKMT…GPVI, TFSS…ATLF, LVTV…INFF, AAVF…LQAA, LSMS…LAFV, LLAS…VQGL, VFVT…SFFV, and IYLG…AVLW. EamA domains lie at 22-147 and 189-317; these read YAGM…TVVG and LSWA…YAVL.

It belongs to the drug/metabolite transporter (DMT) superfamily. Plant drug/metabolite exporter (P-DME) (TC 2.A.7.4) family.

Its subcellular location is the membrane. This chain is WAT1-related protein At2g40900, found in Arabidopsis thaliana (Mouse-ear cress).